Reading from the N-terminus, the 445-residue chain is Oxysterols receptor LXR-alpha (445 aa).

Disordered regions lie at residues 1-34 and 63-86; these read MSLWLEASMPDVSPDSATELWKTEPQDAGDQGGN and ALLPRAETLPEPTELRPQKRKKGP. Residues 1–94 are transactivation AF-1; required for ligand-independent transactivation function; that stretch reads MSLWLEASMP…GPAPKMLGNE (94 aa). The segment at residues 93 to 168 is a DNA-binding region (nuclear receptor); sequence NELCSVCGDK…AGMREECVLS (76 aa). 2 NR C4-type zinc fingers span residues 96–116 and 132–156; these read CSVCGDKASGFHYNVLSCEGC and CHSGGHCPMDTYMRRKCQECRLRKC. S191 carries the phosphoserine modification. Residues 203-445 form a transactivation AF-2; required for ligand-dependent transactivation function; mediates interaction with CCAR2 region; sequence QLSPEQLGMI…LLSEIWDVHE (243 aa). The region spanning 207-445 is the NR LBD domain; the sequence is EQLGMIEKLV…LLSEIWDVHE (239 aa).

This sequence belongs to the nuclear hormone receptor family. NR1 subfamily. Heterodimer of NR1H3 and RXR (retinoic acid receptor). Interacts with CCAR2 (via N-terminus) in a ligand-independent manner. Interacts with SIRT1 and this interaction is inhibited by CCAR2. Post-translationally, ubiquitinated. Ubiquitination by UBR5 leads to its degradation: UBR5 specifically recognizes and binds ligand-bound NR1H3 when it is not associated with coactivators (NCOAs). In presence of NCOAs, the UBR5-degron is not accessible, preventing its ubiquitination and degradation.

The protein resides in the nucleus. The protein localises to the cytoplasm. Functionally, nuclear receptor that exhibits a ligand-dependent transcriptional activation activity. Interaction with retinoic acid receptor (RXR) shifts RXR from its role as a silent DNA-binding partner to an active ligand-binding subunit in mediating retinoid responses through target genes defined by LXRES. LXRES are DR4-type response elements characterized by direct repeats of two similar hexanuclotide half-sites spaced by four nucleotides. Plays an important role in the regulation of cholesterol homeostasis, regulating cholesterol uptake through MYLIP-dependent ubiquitination of LDLR, VLDLR and LRP8. Interplays functionally with RORA for the regulation of genes involved in liver metabolism. Induces LPCAT3-dependent phospholipid remodeling in endoplasmic reticulum (ER) membranes of hepatocytes, driving SREBF1 processing and lipogenesis. Via LPCAT3, triggers the incorporation of arachidonate into phosphatidylcholines of ER membranes, increasing membrane dynamics and enabling triacylglycerols transfer to nascent very low-density lipoprotein (VLDL) particles. Via LPCAT3 also counteracts lipid-induced ER stress response and inflammation, likely by modulating SRC kinase membrane compartmentalization and limiting the synthesis of lipid inflammatory mediators. The polypeptide is Oxysterols receptor LXR-alpha (Nr1h3) (Mus musculus (Mouse)).